Here is a 159-residue protein sequence, read N- to C-terminus: Putative transmembrane protein ORF159 (159 aa).

2 helical membrane passes run 20–40 (LLLS…LSLF) and 59–79 (IIAV…GFCC). A Cell attachment site motif is present at residues 106 to 108 (RGD).

It is found in the host membrane. This chain is Putative transmembrane protein ORF159, found in Acidianus sp. F28 (AFV-2).